The sequence spans 77 residues: Translation initiation factor IF-1, chloroplastic (77 aa).

One can recognise an S1-like domain in the interval 1–71 (MKEQKWIHEG…TRGRIIYRLR (71 aa)).

Belongs to the IF-1 family. Component of the 30S ribosomal translation pre-initiation complex which assembles on the 30S ribosome in the order IF-2 and IF-3, IF-1 and N-formylmethionyl-tRNA(fMet); mRNA recruitment can occur at any time during PIC assembly.

It is found in the plastid. Its subcellular location is the chloroplast. One of the essential components for the initiation of protein synthesis. Stabilizes the binding of IF-2 and IF-3 on the 30S subunit to which N-formylmethionyl-tRNA(fMet) subsequently binds. Helps modulate mRNA selection, yielding the 30S pre-initiation complex (PIC). Upon addition of the 50S ribosomal subunit IF-1, IF-2 and IF-3 are released leaving the mature 70S translation initiation complex. In Montinia caryophyllacea (Wild clove bush), this protein is Translation initiation factor IF-1, chloroplastic.